Reading from the N-terminus, the 276-residue chain is Type II pantothenate kinase (276 aa).

8–15 (DAGGTLTK) provides a ligand contact to ATP. Glutamate 76 acts as the Proton acceptor in catalysis. ATP contacts are provided by residues threonine 105, 127-131 (GGTIM), phenylalanine 143, and serine 230.

Belongs to the type II pantothenate kinase family. Homodimer.

It localises to the cytoplasm. It carries out the reaction (R)-pantothenate + ATP = (R)-4'-phosphopantothenate + ADP + H(+). It functions in the pathway cofactor biosynthesis; coenzyme A biosynthesis; CoA from (R)-pantothenate: step 1/5. Functionally, catalyzes the phosphorylation of pantothenate (Pan), the first step in CoA biosynthesis. The sequence is that of Type II pantothenate kinase from Bacillus cereus (strain ZK / E33L).